The following is a 233-amino-acid chain: Orotidine 5'-phosphate decarboxylase (233 aa).

Residues Asp13, Lys35, 62-71 (DLKFHDIPNT), Thr122, Arg182, Gln191, Gly211, and Arg212 each bind substrate. Lys64 serves as the catalytic Proton donor.

The protein belongs to the OMP decarboxylase family. Type 1 subfamily. Homodimer.

The catalysed reaction is orotidine 5'-phosphate + H(+) = UMP + CO2. It functions in the pathway pyrimidine metabolism; UMP biosynthesis via de novo pathway; UMP from orotate: step 2/2. Catalyzes the decarboxylation of orotidine 5'-monophosphate (OMP) to uridine 5'-monophosphate (UMP). The protein is Orotidine 5'-phosphate decarboxylase of Pseudomonas putida (strain ATCC 700007 / DSM 6899 / JCM 31910 / BCRC 17059 / LMG 24140 / F1).